A 326-amino-acid polypeptide reads, in one-letter code: DNA-directed RNA polymerase subunit alpha (326 aa).

Residues 1–231 form an alpha N-terminal domain (alpha-NTD) region; it reads MQTALLKPKI…DQLSVFAALE (231 aa). The alpha C-terminal domain (alpha-CTD) stretch occupies residues 247-326; the sequence is IDPILLRPVD…ENWPPAGLEK (80 aa).

Belongs to the RNA polymerase alpha chain family. Homodimer. The RNAP catalytic core consists of 2 alpha, 1 beta, 1 beta' and 1 omega subunit. When a sigma factor is associated with the core the holoenzyme is formed, which can initiate transcription.

The enzyme catalyses RNA(n) + a ribonucleoside 5'-triphosphate = RNA(n+1) + diphosphate. Its function is as follows. DNA-dependent RNA polymerase catalyzes the transcription of DNA into RNA using the four ribonucleoside triphosphates as substrates. The protein is DNA-directed RNA polymerase subunit alpha of Cupriavidus necator (strain ATCC 17699 / DSM 428 / KCTC 22496 / NCIMB 10442 / H16 / Stanier 337) (Ralstonia eutropha).